We begin with the raw amino-acid sequence, 337 residues long: Protein-arginine kinase (337 aa).

The Phosphagen kinase C-terminal domain occupies 12-240 (IVIASKVKIL…NKLILREKNQ (229 aa)). ATP-binding positions include 15-19 (ASKVK), 162-166 (RTKVF), and 193-198 (KSIYNS).

The protein belongs to the ATP:guanido phosphotransferase family.

It carries out the reaction L-arginyl-[protein] + ATP = N(omega)-phospho-L-arginyl-[protein] + ADP + H(+). Its function is as follows. Catalyzes the specific phosphorylation of arginine residues in proteins. In Clostridium perfringens (strain 13 / Type A), this protein is Protein-arginine kinase.